A 379-amino-acid polypeptide reads, in one-letter code: Gonadotropin-releasing hormone II receptor (379 aa).

Residues 1–40 (MSAGNGTPWGSAAGEESWAASGVAVEGSELPTFSAAAKVR) lie on the Extracellular side of the membrane. Residues 41 to 60 (VGVTIVLFVSSAGGNLAVLW) traverse the membrane as a helical segment. The Cytoplasmic segment spans residues 61–76 (SVTRPQPSQLRPSPVR). The chain crosses the membrane as a helical span at residues 77-96 (TLFAHLAAADLLVTFVVMPL). At 97–114 (DATWNITVQWLAEDIACR) the chain is on the extracellular side. Asn-101 carries N-linked (GlcNAc...) asparagine glycosylation. The cysteines at positions 113 and 188 are disulfide-linked. The chain crosses the membrane as a helical span at residues 115–136 (TLMFLKLMAMYSAAFLPVVIGL). Topologically, residues 137-160 (DRQAAVLNPLGSRSGVRKLLGAAW) are cytoplasmic. The chain crosses the membrane as a helical span at residues 161–178 (GLSFLLALPQLFLFHTVH). The Extracellular portion of the chain corresponds to 179 to 204 (RAGPVPFTQCVTKGSFKARWQETTYN). Residues 205 to 224 (LFTFRCLFLLPLTAMAICYS) traverse the membrane as a helical segment. Residues 225–278 (HIVLSVSSPQTRKGSHAPAGEFALCRSFDNCPRVRLWALRLALLILLTFILCWT) are Cytoplasmic-facing. The chain crosses the membrane as a helical span at residues 279–297 (PYYLLGLWYWFSPTMLTEV). Topologically, residues 298–303 (PPSLSH) are extracellular. The helical transmembrane segment at 304–323 (ILFLFGLLNAPLDPLLYGAF) threads the bilayer. Topologically, residues 324-379 (TLGCQRGHQELSIDSSNEGSGRMLQQEIHALRQQEVQKTVTSRSAGETKDISITSI) are cytoplasmic.

Belongs to the G-protein coupled receptor 1 family. Phosphorylated on the C-terminal cytoplasmic tail.

The protein localises to the cell membrane. Its function is as follows. Receptor for gonadotropin releasing hormone II (GnRH II). This receptor mediates its action by association with G proteins that activate a phosphatidylinositol-calcium second messenger system. The chain is Gonadotropin-releasing hormone II receptor (GNRHR2) from Macaca mulatta (Rhesus macaque).